The sequence spans 273 residues: Undecaprenyl-diphosphatase (273 aa).

7 helical membrane-spanning segments follow: residues 48 to 68 (AANT…VVVF), 89 to 109 (LTLL…VLFE), 116 to 136 (LFST…MIVA), 152 to 172 (ITYK…WPGF), 193 to 213 (ADFT…LSLL), 222 to 242 (ADIP…LLAI), and 252 to 272 (IRLV…YFLY).

It belongs to the UppP family.

Its subcellular location is the cell membrane. The enzyme catalyses di-trans,octa-cis-undecaprenyl diphosphate + H2O = di-trans,octa-cis-undecaprenyl phosphate + phosphate + H(+). Catalyzes the dephosphorylation of undecaprenyl diphosphate (UPP). Confers resistance to bacitracin. The sequence is that of Undecaprenyl-diphosphatase from Geobacillus thermodenitrificans (strain NG80-2).